The sequence spans 137 residues: Large ribosomal subunit protein uL16 (137 aa).

This sequence belongs to the universal ribosomal protein uL16 family. Part of the 50S ribosomal subunit.

Functionally, binds 23S rRNA and is also seen to make contacts with the A and possibly P site tRNAs. The polypeptide is Large ribosomal subunit protein uL16 (Endomicrobium trichonymphae).